The sequence spans 533 residues: Single-strand DNA-binding protein (533 aa).

The segment covering 1 to 10 (MDLSGNEKSR) has biased composition (basic and acidic residues). Disordered regions lie at residues 1–67 (MDLS…EHGN) and 504–533 (FVRP…VNSF). Residues 16–42 (NVSSSTISDIQMTNGENLESGSPTRTE) are compositionally biased toward polar residues. The span at 53–63 (VDSSSSLYSGS) shows a compositional bias: low complexity. Positions 515–525 (SDSRRIYESRP) are enriched in basic and acidic residues.

Forms heterodimers with the chaperone protein virE1 that prevent virE2 anarchic homopolymerization. Interacts with host VIP1 that mediates its translocation to the host nucleus and host VIP2 that promotes T-DNA integration into the host genome. Forms a complex made of VirE2, host VIP1 and VIP2 and single-stranded DNA (ssDNA). Forms a complex made of virE2 and host proteins VIP1 and VBF.

The protein resides in the secreted. Its subcellular location is the host nucleus. Functionally, involved in DNA transformation; mediates the nuclear uptake of single-stranded DNA copies of the transferred DNA (T-DNA) element. Binds single-stranded but not double-stranded DNA regardless of nucleotide sequence composition. The chain is Single-strand DNA-binding protein (virE2) from Agrobacterium tumefaciens (strain 15955).